The sequence spans 229 residues: Protein-L-isoaspartate O-methyltransferase (229 aa).

Ser-78 is an active-site residue.

This sequence belongs to the methyltransferase superfamily. L-isoaspartyl/D-aspartyl protein methyltransferase family.

It localises to the cytoplasm. The enzyme catalyses [protein]-L-isoaspartate + S-adenosyl-L-methionine = [protein]-L-isoaspartate alpha-methyl ester + S-adenosyl-L-homocysteine. Its function is as follows. Catalyzes the methyl esterification of L-isoaspartyl residues in peptides and proteins that result from spontaneous decomposition of normal L-aspartyl and L-asparaginyl residues. It plays a role in the repair and/or degradation of damaged proteins. The sequence is that of Protein-L-isoaspartate O-methyltransferase from Chromohalobacter salexigens (strain ATCC BAA-138 / DSM 3043 / CIP 106854 / NCIMB 13768 / 1H11).